We begin with the raw amino-acid sequence, 109 residues long: Putative double-stranded DNA mimic protein YciU (109 aa).

This sequence belongs to the putative dsDNA mimic protein family.

Functionally, may act as a double-stranded DNA (dsDNA) mimic. Probably regulates the activity of a dsDNA-binding protein. In Shigella boydii serotype 18 (strain CDC 3083-94 / BS512), this protein is Putative double-stranded DNA mimic protein YciU.